The sequence spans 302 residues: MSQLLQDYLNWENYILRRVDFPTSYVVEGEVVRIEAMPRLYISGMGGSGVVADLIRDFSLTWNWEVEVIAVKDYFLKARDGLLIAVSYSGNTIETLYTVEYAKRRRIPAVAITTGGRLAQMGVPTVIVPKASAPRAALPQLLTAALHVVAKVYGIDVKIPEGLEPPNEALIHKLVEEFQKRPTIIAAESMRGVAYRVKNEFNENAKIEPSVEILPEAHHNWIEGSERAVVALTSPHIPKEHQERVKATVEIVGGSIYAVEMHPKGVLSFLRDVGIASVKLAEIRGVNPLATPRIDALKRRLQ.

One can recognise an SIS domain in the interval 27 to 160; it reads VEGEVVRIEA…KVYGIDVKIP (134 aa). D-fructose 6-phosphate-binding residues include G47, S48, S87, S89, T92, and R135. 6 residues coordinate D-glucose 6-phosphate: G47, S48, S87, S89, T92, and R135. Residue E203 is the Proton acceptor of the active site. Positions 219 and 298 each coordinate D-fructose 6-phosphate. Positions 219 and 298 each coordinate D-glucose 6-phosphate. The Proton donor role is filled by H219. The Proton acceptor role is filled by K298.

It belongs to the PGI/PMI family. In terms of assembly, homodimer.

It is found in the cytoplasm. The catalysed reaction is alpha-D-glucose 6-phosphate = beta-D-fructose 6-phosphate. It carries out the reaction D-mannose 6-phosphate = D-fructose 6-phosphate. Inhibited by 5-phosphoarabinonate (PAB) and 6-phosphogluconate. In terms of biological role, dual specificity isomerase that catalyzes the isomerization of both glucose-6-phosphate and mannose-6-phosphate to fructose-6-phosphate with similar catalytic efficiency. This chain is Bifunctional phosphoglucose/phosphomannose isomerase, found in Pyrobaculum aerophilum (strain ATCC 51768 / DSM 7523 / JCM 9630 / CIP 104966 / NBRC 100827 / IM2).